Here is a 1092-residue protein sequence, read N- to C-terminus: Fibrinogen-binding protein (1092 aa).

The signal sequence occupies residues 1 to 51 (MINKKNNLLTKKKPIANKSNKYAIRKFTVGTASIVIGATLLFGLGHNEAKA). A compositionally biased stretch (basic and acidic residues) spans 50-63 (KAEENSVQDVKDSN). Residues 50–236 (KAEENSVQDV…GYTNIDEKIS (187 aa)) are disordered. The tract at residues 52–599 (EENSVQDVKD…GQGQGDLPPE (548 aa)) is ligand binding A region. Over residues 64–76 (TDDELSDSNDQSS) the composition is skewed to acidic residues. The span at 84 to 98 (INNNQSINTDDNNQI) shows a compositional bias: low complexity. Residues 99 to 119 (IKKEETNNYDGIEKRSEDRTE) show a composition bias toward basic and acidic residues. The span at 120–140 (STTNVDENEATFLQKTPQDNT) shows a compositional bias: polar residues. The segment covering 141 to 151 (HLTEEEVKESS) has biased composition (basic and acidic residues). The span at 160–170 (IDTAQQPSHTT) shows a compositional bias: polar residues. Positions 195-220 (KIKESNTESGKEENTIEQPNKVKEDS) are enriched in basic and acidic residues. 4 residues coordinate Ca(2+): glutamate 294, serine 299, valine 302, and glutamate 309. Residues 579-590 (YDNTIAFSTSSG) are interaction with human fibrinogen. 2 CNA-B domains span residues 600–713 (KTYK…YQTP) and 714–824 (KYSL…YDDE). The tract at residues 780 to 1068 (KPSGMTQTTT…NEDYGSKGTL (289 aa)) is disordered. Residues 791 to 801 (SGDDDEQDADG) show a composition bias toward acidic residues. Basic and acidic residues predominate over residues 802 to 814 (EEVHVTITDHDDF). Acidic residues predominate over residues 820 to 1039 (YYDDESDSDS…DSDSDSDNDS (220 aa)). Residues 1053–1057 (LPDTG) carry the LPXTG sorting signal motif. Position 1056 is a pentaglycyl murein peptidoglycan amidated threonine (threonine 1056). The propeptide at 1057-1092 (GANEDYGSKGTLLGTLFAGLGALLLGKRRKNRKNKN) is removed by sortase.

Belongs to the serine-aspartate repeat-containing protein (SDr) family.

The protein localises to the secreted. It is found in the cell wall. In terms of biological role, promotes bacterial attachment to both soluble and immobilized forms of fibrinogen in a dose-dependent manner. This binding occurs through the beta-chain of human fibrinogen. Could contribute to the initiation of foreign-body infection by allowing bacteria to adhere to biomaterial surfaces that have become coated with host proteins after implantation. Is important in the pathogenesis of central venous catheter (CVC)-associated infection model. The protein is Fibrinogen-binding protein (fbe) of Staphylococcus epidermidis.